Consider the following 499-residue polypeptide: Alpha-L-arabinofuranosidase B (499 aa).

Positions 1-18 are cleaved as a signal peptide; that stretch reads MFSRRNLVALGLAATVSA. N-linked (GlcNAc...) asparagine glycans are attached at residues Asn-83 and Asn-202.

The protein belongs to the glycosyl hydrolase 54 family.

The catalysed reaction is Hydrolysis of terminal non-reducing alpha-L-arabinofuranoside residues in alpha-L-arabinosides.. Its pathway is glycan metabolism; L-arabinan degradation. Functionally, able to hydrolyze 1,5-, 1,3- and 1,2-alpha-linkages not only in L-arabinofuranosyl oligosaccharides, but also in polysac-charides containing terminal non-reducing L-arabinofuranoses in side chains, like L-arabinan, arabinogalactan and arabinoxylan. The polypeptide is Alpha-L-arabinofuranosidase B (abfB) (Aspergillus niger).